Consider the following 250-residue polypeptide: PTB-containing, cubilin and LRP1-interacting protein (250 aa).

A PID domain is found at 93–250 (VTYLGKVSTT…VSQELESDDG (158 aa)). Residues 229 to 250 (DGRIHSNSSSEEVSQELESDDG) are disordered. Phosphoserine is present on residues S236 and S247. Residues 241–250 (VSQELESDDG) are compositionally biased toward acidic residues.

Found in a complex with PID1/PCLI1, LRP1 and CUBNI. Interacts with LRP1 and CUBN. In terms of tissue distribution, expressed in subcutaneous fat, heart, skeletal muscle, brain, colon, thymus, spleen, kidney, liver, small intestine, placenta, lung and peripheral blood leukocyte.

The protein localises to the cytoplasm. Increases proliferation of preadipocytes without affecting adipocytic differentiation. The sequence is that of PTB-containing, cubilin and LRP1-interacting protein (PID1) from Homo sapiens (Human).